The chain runs to 341 residues: Protein pelota homolog (341 aa).

It belongs to the eukaryotic release factor 1 family. Pelota subfamily. As to quaternary structure, monomer. Requires a divalent metal cation as cofactor.

The protein resides in the cytoplasm. In terms of biological role, may function in recognizing stalled ribosomes, interact with stem-loop structures in stalled mRNA molecules, and effect endonucleolytic cleavage of the mRNA. May play a role in the release non-functional ribosomes and degradation of damaged mRNAs. Has endoribonuclease activity. The protein is Protein pelota homolog of Metallosphaera sedula (strain ATCC 51363 / DSM 5348 / JCM 9185 / NBRC 15509 / TH2).